The sequence spans 237 residues: MRPSNRTPAQTRPITITRSFTAHAEGSVLVEFGDTKVLCTASFTEGVPRFLKGQGQGWVTAEYGMLPRSTHSRMDREAARGKQSGRTQEIQRLIGRALRAAVDMKLLGENTIVIDCDVIQADGGTRTAAITGACVALVDALNWARGKGIIKANPLKFLIAAVSVGIYKGEAISDLEYIEDSAAETDMNVVMTETGKIIEIQGTAEGEPFSHEELLELLVLAKNSIREIVDVQKAALS.

Phosphate contacts are provided by residues arginine 86 and 124 to 126 (GTR).

This sequence belongs to the RNase PH family. Homohexameric ring arranged as a trimer of dimers.

It catalyses the reaction tRNA(n+1) + phosphate = tRNA(n) + a ribonucleoside 5'-diphosphate. Phosphorolytic 3'-5' exoribonuclease that plays an important role in tRNA 3'-end maturation. Removes nucleotide residues following the 3'-CCA terminus of tRNAs; can also add nucleotides to the ends of RNA molecules by using nucleoside diphosphates as substrates, but this may not be physiologically important. Probably plays a role in initiation of 16S rRNA degradation (leading to ribosome degradation) during starvation. This is Ribonuclease PH from Shewanella frigidimarina (strain NCIMB 400).